The chain runs to 270 residues: Electron transfer flavoprotein subunit beta (270 aa).

Belongs to the ETF alpha-subunit/FixB family. As to quaternary structure, heterodimer of an alpha and a beta subunit. It depends on FAD as a cofactor.

Its function is as follows. The electron transfer flavoprotein serves as a specific electron acceptor for other dehydrogenases. It transfers the electrons to the main respiratory chain via ETF-ubiquinone oxidoreductase (ETF dehydrogenase). The protein is Electron transfer flavoprotein subunit beta (etfB) of Megasphaera elsdenii.